A 360-amino-acid chain; its full sequence is Phospho-N-acetylmuramoyl-pentapeptide-transferase (360 aa).

10 consecutive transmembrane segments (helical) span residues 27–47, 71–91, 94–114, 132–152, 168–188, 199–219, 236–256, 263–283, 288–308, and 338–358; these read IVSL…MIAF, TPTM…LLWV, NNPY…VGFV, WKYF…YSFG, VMPQ…VGTS, GLAI…AWAT, AGEL…FLWF, VFMG…IAVL, FLLV…ILQV, and VIVR…ATLK.

It belongs to the glycosyltransferase 4 family. MraY subfamily. Mg(2+) serves as cofactor.

It is found in the cell inner membrane. It catalyses the reaction UDP-N-acetyl-alpha-D-muramoyl-L-alanyl-gamma-D-glutamyl-meso-2,6-diaminopimeloyl-D-alanyl-D-alanine + di-trans,octa-cis-undecaprenyl phosphate = di-trans,octa-cis-undecaprenyl diphospho-N-acetyl-alpha-D-muramoyl-L-alanyl-D-glutamyl-meso-2,6-diaminopimeloyl-D-alanyl-D-alanine + UMP. The protein operates within cell wall biogenesis; peptidoglycan biosynthesis. In terms of biological role, catalyzes the initial step of the lipid cycle reactions in the biosynthesis of the cell wall peptidoglycan: transfers peptidoglycan precursor phospho-MurNAc-pentapeptide from UDP-MurNAc-pentapeptide onto the lipid carrier undecaprenyl phosphate, yielding undecaprenyl-pyrophosphoryl-MurNAc-pentapeptide, known as lipid I. The polypeptide is Phospho-N-acetylmuramoyl-pentapeptide-transferase (Photorhabdus laumondii subsp. laumondii (strain DSM 15139 / CIP 105565 / TT01) (Photorhabdus luminescens subsp. laumondii)).